The chain runs to 115 residues: Ribonuclease P protein component (115 aa).

Belongs to the RnpA family. Consists of a catalytic RNA component (M1 or rnpB) and a protein subunit.

The catalysed reaction is Endonucleolytic cleavage of RNA, removing 5'-extranucleotides from tRNA precursor.. Functionally, RNaseP catalyzes the removal of the 5'-leader sequence from pre-tRNA to produce the mature 5'-terminus. It can also cleave other RNA substrates such as 4.5S RNA. The protein component plays an auxiliary but essential role in vivo by binding to the 5'-leader sequence and broadening the substrate specificity of the ribozyme. This chain is Ribonuclease P protein component, found in Bacillus cereus (strain AH187).